The sequence spans 421 residues: Gamma-glutamyl phosphate reductase (421 aa).

The protein belongs to the gamma-glutamyl phosphate reductase family.

It localises to the cytoplasm. The catalysed reaction is L-glutamate 5-semialdehyde + phosphate + NADP(+) = L-glutamyl 5-phosphate + NADPH + H(+). It functions in the pathway amino-acid biosynthesis; L-proline biosynthesis; L-glutamate 5-semialdehyde from L-glutamate: step 2/2. Catalyzes the NADPH-dependent reduction of L-glutamate 5-phosphate into L-glutamate 5-semialdehyde and phosphate. The product spontaneously undergoes cyclization to form 1-pyrroline-5-carboxylate. This chain is Gamma-glutamyl phosphate reductase, found in Nocardia farcinica (strain IFM 10152).